The chain runs to 301 residues: uncharacterized protein (301 aa).

This is an uncharacterized protein from Sinorhizobium fredii (strain NBRC 101917 / NGR234).